Reading from the N-terminus, the 542-residue chain is uncharacterized protein (542 aa).

The tract at residues 256-275 (KKSTTTSSPPITTTHLSKPE) is disordered. Low complexity predominate over residues 258 to 269 (STTTSSPPITTT).

This is an uncharacterized protein from Caenorhabditis elegans.